Consider the following 172-residue polypeptide: Large ribosomal subunit protein uL10 (172 aa).

This sequence belongs to the universal ribosomal protein uL10 family. In terms of assembly, part of the ribosomal stalk of the 50S ribosomal subunit. The N-terminus interacts with L11 and the large rRNA to form the base of the stalk. The C-terminus forms an elongated spine to which L12 dimers bind in a sequential fashion forming a multimeric L10(L12)X complex.

In terms of biological role, forms part of the ribosomal stalk, playing a central role in the interaction of the ribosome with GTP-bound translation factors. The polypeptide is Large ribosomal subunit protein uL10 (rplJ) (Caulobacter vibrioides (strain ATCC 19089 / CIP 103742 / CB 15) (Caulobacter crescentus)).